A 379-amino-acid chain; its full sequence is RNA-splicing ligase RtcB2 (379 aa).

Mn(2+)-binding residues include Asp-74, Cys-77, His-137, His-168, and His-239. Asn-136–Glu-140 provides a ligand contact to GMP. GMP is bound by residues His-239–Asn-240, Ser-277, His-294–Gly-297, and Lys-372. His-294 (GMP-histidine intermediate) is an active-site residue.

The protein belongs to the RtcB family. RtcB2 subfamily. It depends on Mn(2+) as a cofactor.

The catalysed reaction is a 3'-end 3'-phospho-ribonucleotide-RNA + a 5'-end dephospho-ribonucleoside-RNA + GTP = a ribonucleotidyl-ribonucleotide-RNA + GMP + diphosphate. Its function is as follows. GTP-dependent RNA ligase involved in rRNA repair. Repairs damaged 16S rRNA in 30S subunits that has been cleaved between adenine-1493 and guanosine-1494 (E.coli nubering). This specific cleavage is inflicted by CdiA (ECL_04451) or by colicin E3-type (ColE3) proteins. Poorly repairs damaged rRNA in the 70S ribosome; addition of release factor PrfH improves repair about 3-fold in vitro, probably because PrfH hydrolyzes the nascent chain allowing ribosomal subunit dissociation. In vivo the PrfH-RtcB2 pair restores growth in the presence of ribotoxins that specifically create this damage. Does not repair damaged tRNA (tested with tRNA(Asp) and tRNA(Arg)). This Escherichia coli (strain ATCC 25922 / DSM 1103 / LMG 8223 / NCIMB 12210 / NCTC 12241 / WDCM 00013 / Seattle 1946) protein is RNA-splicing ligase RtcB2.